The sequence spans 390 residues: Lipid-A-disaccharide synthase (390 aa).

It belongs to the LpxB family.

The enzyme catalyses a lipid X + a UDP-2-N,3-O-bis[(3R)-3-hydroxyacyl]-alpha-D-glucosamine = a lipid A disaccharide + UDP + H(+). It functions in the pathway bacterial outer membrane biogenesis; LPS lipid A biosynthesis. Condensation of UDP-2,3-diacylglucosamine and 2,3-diacylglucosamine-1-phosphate to form lipid A disaccharide, a precursor of lipid A, a phosphorylated glycolipid that anchors the lipopolysaccharide to the outer membrane of the cell. This chain is Lipid-A-disaccharide synthase, found in Haemophilus influenzae (strain PittGG).